Reading from the N-terminus, the 223-residue chain is Uracil-DNA glycosylase (223 aa).

Aspartate 67 serves as the catalytic Proton acceptor.

Belongs to the uracil-DNA glycosylase (UDG) superfamily. UNG family.

It localises to the cytoplasm. The catalysed reaction is Hydrolyzes single-stranded DNA or mismatched double-stranded DNA and polynucleotides, releasing free uracil.. Functionally, excises uracil residues from the DNA which can arise as a result of misincorporation of dUMP residues by DNA polymerase or due to deamination of cytosine. The sequence is that of Uracil-DNA glycosylase from Borrelia hermsii (strain HS1 / DAH).